Reading from the N-terminus, the 747-residue chain is Flowering time control protein FCA (747 aa).

Residues 80–101 form a disordered region; sequence YSVRPTTPPVQQPLSGQKRGYP. RRM domains lie at 120-201 and 211-291; these read VKLF…YADG and FKLF…FAEP. The segment covering 291-301 has biased composition (basic and acidic residues); it reads PKRPKPGESRE. A disordered region spans residues 291 to 503; it reads PKRPKPGESR…QQPLQKMQHP (213 aa). Composition is skewed to polar residues over residues 320 to 353 and 395 to 406; these read RPTSNFGDSSGDVSHTNPWRPATSRNVGPPSNTG and SSSATLQQQNRA. Residues 448-460 show a composition bias toward low complexity; the sequence is SSQLPTSQLPPQQ. The span at 461–498 shows a compositional bias: polar residues; sequence NISRATAPQTPLNINLRPTTVSSATVQFPPRSQQQPLQ. The 34-residue stretch at 591-624 folds into the WW domain; the sequence is GSVKCTWTEHTSPDGFKYYYNGLTGESKWEKPEE. Residues 630-641 are compositionally biased toward basic and acidic residues; sequence REQQKQQQHQEK. 2 disordered regions span residues 630–707 and 722–747; these read REQQ…SGIG and AASMNDISRTQQSRQSPQELMWKNKA. A compositionally biased stretch (low complexity) spans 642 to 673; it reads PTIQQSQTQLQPLQQQPQQVQQQYQGQQLQQP. 2 stretches are compositionally biased toward polar residues: residues 674 to 707 and 726 to 739; these read FYSSLYPTPGASHNTQYPSLPVGQNSQFPMSGIG and NDISRTQQSRQSPQ.

As to quaternary structure, interacts (via C-terminus) with SWI3B and (via WW domain) with FY (via PPLPP motifs). In terms of tissue distribution, constitutively expressed, but the negative feedback maintains the active isoform a low level throughout much of the plant, except in meristematic cells at a specific time in development.

Its subcellular location is the nucleus. Its function is as follows. Plays a major role in the promotion of the transition of the vegetative meristem to reproductive development. Plays a role in the regulation of flowering time in the autonomous flowering pathway by decreasing FLOWERING LOCUS C mRNA levels. Required for RNA-mediated chromatin silencing of a range of loci in the genome. Cotranscriptionally recognizes aberrant RNA and marks it for silencing. Controls alternative cleavage and polyadenylation on pre-mRNAs and antisense RNAs. Acts redundantly with FPA to prevent the expression of distally polyadenylated antisense RNAs at the FLC locus. This is Flowering time control protein FCA (FCA) from Arabidopsis thaliana (Mouse-ear cress).